Consider the following 636-residue polypeptide: Biosynthetic arginine decarboxylase (636 aa).

Lysine 110 is modified (N6-(pyridoxal phosphate)lysine). 290–300 (IDVGGGLGVDY) contacts substrate.

Belongs to the Orn/Lys/Arg decarboxylase class-II family. SpeA subfamily. Mg(2+) serves as cofactor. Requires pyridoxal 5'-phosphate as cofactor.

It carries out the reaction L-arginine + H(+) = agmatine + CO2. In terms of biological role, catalyzes the biosynthesis of agmatine from arginine. The protein is Biosynthetic arginine decarboxylase of Pseudomonas aeruginosa (strain ATCC 15692 / DSM 22644 / CIP 104116 / JCM 14847 / LMG 12228 / 1C / PRS 101 / PAO1).